We begin with the raw amino-acid sequence, 289 residues long: Phosphatidylglycerol--prolipoprotein diacylglyceryl transferase (289 aa).

The next 7 membrane-spanning stretches (helical) occupy residues 23-43 (ALHW…WLAV), 61-81 (LLYM…VLFY), 99-119 (GGMS…WFAH), 125-145 (FFQV…AGRL), 199-219 (SQLY…NLFI), 226-246 (GSVS…TEFF), and 259-279 (LFSM…LMMV). Arginine 144 is an a 1,2-diacyl-sn-glycero-3-phospho-(1'-sn-glycerol) binding site.

Belongs to the Lgt family.

The protein localises to the cell inner membrane. The enzyme catalyses L-cysteinyl-[prolipoprotein] + a 1,2-diacyl-sn-glycero-3-phospho-(1'-sn-glycerol) = an S-1,2-diacyl-sn-glyceryl-L-cysteinyl-[prolipoprotein] + sn-glycerol 1-phosphate + H(+). It participates in protein modification; lipoprotein biosynthesis (diacylglyceryl transfer). Functionally, catalyzes the transfer of the diacylglyceryl group from phosphatidylglycerol to the sulfhydryl group of the N-terminal cysteine of a prolipoprotein, the first step in the formation of mature lipoproteins. This Pectobacterium atrosepticum (strain SCRI 1043 / ATCC BAA-672) (Erwinia carotovora subsp. atroseptica) protein is Phosphatidylglycerol--prolipoprotein diacylglyceryl transferase.